The chain runs to 252 residues: uncharacterized protein (252 aa).

This sequence belongs to the methyltransferase superfamily.

This is an uncharacterized protein from Mycobacterium sp. (strain KMS).